The chain runs to 279 residues: Dehydrogenase/reductase SDR family member 4 (279 aa).

Residue 37 to 61 coordinates NADP(+); sequence LVTASTDGIGFAIARRLAQDGAHVV. N6-acetyllysine; alternate is present on Lys93. N6-succinyllysine; alternate is present on Lys93. Lys106 carries the post-translational modification N6-acetyllysine. Ser170 provides a ligand contact to substrate. Tyr183 (proton acceptor) is an active-site residue. Position 187 (Lys187) interacts with NADP(+). Ser221 is subject to Phosphoserine. N6-succinyllysine is present on Lys235. The Peroxisomal targeting signal motif lies at 277-279; the sequence is SHL.

The protein belongs to the short-chain dehydrogenases/reductases (SDR) family. Homotetramer.

The protein localises to the peroxisome. The enzyme catalyses a secondary alcohol + NADP(+) = a ketone + NADPH + H(+). It carries out the reaction 3alpha-hydroxy-5beta-pregnan-20-one + NADP(+) = 5beta-pregnan-3,20-dione + NADPH + H(+). It catalyses the reaction 5beta-dihydrotestosterone + NADPH + H(+) = 5beta-androstane-3alpha,17beta-diol + NADP(+). The catalysed reaction is all-trans-retinol + NADP(+) = all-trans-retinal + NADPH + H(+). The enzyme catalyses isatin + NADPH + H(+) = 3-hydroxyindolin-2-one + NADP(+). Its function is as follows. NADPH-dependent oxidoreductase which catalyzes the reduction of a variety of compounds bearing carbonyl groups including ketosteroids, alpha-dicarbonyl compounds, aldehydes, aromatic ketones and quinones. Reduces all-trans-retinal and 9-cis retinal. Reduces 3-ketosteroids and benzil into 3alpha-hydroxysteroids and S-benzoin, respectively, in contrast to the stereoselectivity of primates DHRS4s which produce 3beta-hydroxysteroids and R-benzoin. In the reverse reaction, catalyzes the NADP-dependent oxidation of 3alpha-hydroxysteroids and alcohol, but with much lower efficiency. Involved in the metabolism of 3alpha-hydroxysteroids, retinoid, isatin and xenobiotic carbonyl compounds. This Bos taurus (Bovine) protein is Dehydrogenase/reductase SDR family member 4 (DHRS4).